Consider the following 217-residue polypeptide: Large ribosomal subunit protein uL1 (217 aa).

Belongs to the universal ribosomal protein uL1 family.

The chain is Large ribosomal subunit protein uL1 (RPL10A) from Candida glabrata (strain ATCC 2001 / BCRC 20586 / JCM 3761 / NBRC 0622 / NRRL Y-65 / CBS 138) (Yeast).